The chain runs to 103 residues: Large ribosomal subunit protein uL24 (103 aa).

This sequence belongs to the universal ribosomal protein uL24 family. As to quaternary structure, part of the 50S ribosomal subunit.

One of two assembly initiator proteins, it binds directly to the 5'-end of the 23S rRNA, where it nucleates assembly of the 50S subunit. Its function is as follows. One of the proteins that surrounds the polypeptide exit tunnel on the outside of the subunit. The sequence is that of Large ribosomal subunit protein uL24 from Histophilus somni (strain 129Pt) (Haemophilus somnus).